The following is a 288-amino-acid chain: NAD(P)H-hydrate epimerase (288 aa).

The transit peptide at 1–32 directs the protein to the mitochondrion; the sequence is MSGLRALLGLGLLVAGSRLSRVRVQAGSCRAG. A Phosphoserine modification is found at Ser-49. The YjeF N-terminal domain maps to 65–275; sequence AQAVDQELFN…ALEKKYQLNL (211 aa). 119-123 lines the (6S)-NADPHX pocket; that stretch reads NNGGD. Asn-120 lines the K(+) pocket. At Lys-144 the chain carries N6-succinyllysine. Asp-185 lines the K(+) pocket. Residues 189-195 and Asp-218 contribute to the (6S)-NADPHX site; that span reads GFSFTGE. Ser-221 is a binding site for K(+).

The protein belongs to the NnrE/AIBP family. As to quaternary structure, homodimer. Interacts with APOA1 and APOA2. It depends on K(+) as a cofactor. Post-translationally, undergoes physiological phosphorylation during sperm capacitation, downstream to PKA activation.

Its subcellular location is the mitochondrion. The protein resides in the secreted. It catalyses the reaction (6R)-NADHX = (6S)-NADHX. It carries out the reaction (6R)-NADPHX = (6S)-NADPHX. In terms of biological role, catalyzes the epimerization of the S- and R-forms of NAD(P)HX, a damaged form of NAD(P)H that is a result of enzymatic or heat-dependent hydration. This is a prerequisite for the S-specific NAD(P)H-hydrate dehydratase to allow the repair of both epimers of NAD(P)HX. Accelerates cholesterol efflux from endothelial cells to high-density lipoprotein (HDL) and thereby regulates angiogenesis. This chain is NAD(P)H-hydrate epimerase, found in Bos taurus (Bovine).